Here is a 321-residue protein sequence, read N- to C-terminus: Mitochondrial thiamine pyrophosphate carrier 1 (321 aa).

Transmembrane regions (helical) follow at residues 12-28 (GTRR…GLVS), 91-107 (LMYV…YRTT), 126-146 (FVAG…LDLL), 184-200 (AAVG…FATY), 221-237 (AAGV…MFPL), and 284-301 (GLTV…VTMW). Solcar repeat units follow at residues 12-110 (GTRR…TTQA), 120-206 (PPSA…LRPP), and 214-309 (PFGS…SLRL).

The protein belongs to the mitochondrial carrier (TC 2.A.29) family.

The protein resides in the mitochondrion inner membrane. Mitochondrial transporter that mediates uptake of thiamine pyrophosphate (ThPP) into mitochondria. This chain is Mitochondrial thiamine pyrophosphate carrier 1 (tpc1), found in Aspergillus niger (strain ATCC MYA-4892 / CBS 513.88 / FGSC A1513).